A 245-amino-acid chain; its full sequence is Type III pantothenate kinase (245 aa).

Residue 6–13 coordinates ATP; it reads DVGNTAMK. Substrate contacts are provided by residues Tyr93 and 100–103; that span reads GVDR. Asp102 functions as the Proton acceptor in the catalytic mechanism. Asp121 contacts K(+). Ser124 contributes to the ATP binding site. Thr175 is a binding site for substrate.

It belongs to the type III pantothenate kinase family. Homodimer. NH4(+) is required as a cofactor. The cofactor is K(+).

It is found in the cytoplasm. The enzyme catalyses (R)-pantothenate + ATP = (R)-4'-phosphopantothenate + ADP + H(+). Its pathway is cofactor biosynthesis; coenzyme A biosynthesis; CoA from (R)-pantothenate: step 1/5. Its function is as follows. Catalyzes the phosphorylation of pantothenate (Pan), the first step in CoA biosynthesis. This chain is Type III pantothenate kinase, found in Alcanivorax borkumensis (strain ATCC 700651 / DSM 11573 / NCIMB 13689 / SK2).